Here is a 223-residue protein sequence, read N- to C-terminus: Putative synaptogyrin-2 like protein (223 aa).

An N-acetylmethionine modification is found at methionine 1. Serine 3 is subject to Phosphoserine. The MARVEL domain maps to 20–170 (FLTQPQVVAR…LASLTYQRYK (151 aa)). 4 helical membrane passes run 26-46 (VVAR…IYGE), 71-91 (GSAI…DAYF), 104-124 (VIGD…GFCF), and 146-166 (AAIT…SLTY). The interval 197-223 (ASVDNYQQPPFTQNAETTEGYQPPPVY) is disordered. Residues 200–216 (DNYQQPPFTQNAETTEG) are compositionally biased toward polar residues.

Belongs to the synaptogyrin family.

The protein resides in the membrane. In Homo sapiens (Human), this protein is Putative synaptogyrin-2 like protein.